Here is a 979-residue protein sequence, read N- to C-terminus: Ankycorbin (979 aa).

The residue at position 1 (M1) is an N-acetylmethionine. S11 is modified (phosphoserine). ANK repeat units lie at residues 18-51 (KNDD…KHDS), 52-81 (EGKT…DVTA), 85-114 (SGHS…PAEN), 118-147 (SGKT…PINL), 151-180 (DGNI…DVNS), 184-213 (NGRT…DLSL), and 217-247 (LGHN…DADL). Residues 247–259 (LKTPTKPKQHDQV) show a composition bias toward basic and acidic residues. Positions 247–299 (LKTPTKPKQHDQVSKISSERSGTPKKRKAPPPPISPTQLSDVSSPRSITSTPL) are disordered. Position 249 is a phosphothreonine (T249). Residues 270–276 (PKKRKAP) carry the Nuclear localization signal motif. A phosphoserine mark is found at S281, S286, and S293. Residues 282-299 (PTQLSDVSSPRSITSTPL) are compositionally biased toward polar residues. Phosphothreonine is present on residues T295 and T297. Residues S300, S304, S318, S327, S329, S340, S341, and S358 each carry the phosphoserine modification. Residues 349 to 374 (LVLLQAKVASLTLHNKELQDKLQAKS) adopt a coiled-coil conformation. Disordered regions lie at residues 392–429 (TQTD…TDND) and 446–467 (LESS…RTDT). The stretch at 430 to 943 (VIIRQLQDSL…CKKHHQEVIS (514 aa)) forms a coiled coil. A compositionally biased stretch (basic and acidic residues) spans 446 to 457 (LESSEAEKKQLQ). Residues 458–467 (DELQSQRTDT) are compositionally biased toward polar residues. Phosphoserine is present on residues S513, S516, S667, S694, and S914.

Interacts with PALLD. Associates with actin. However, does not bind F-actin directly. Highly expressed in testis, where it localizes to seminiferous tubules (at protein level). Expressed in ganglion cell layer and in Muller cell fibers of the retina (at protein level). In small intestine highly expressed at the apical and lateral borders of absorptive epithelia (at protein level). In liver highly expressed along the bile canaliculi (at protein level).

Its subcellular location is the cytoplasm. The protein resides in the cytoskeleton. It is found in the stress fiber. The protein localises to the cell cortex. It localises to the cell junction. Its subcellular location is the nucleus. Its function is as follows. Plays a role in actin regulation at the ectoplasmic specialization, a type of cell junction specific to testis. Important for establishment of sperm polarity and normal spermatid adhesion. May also promote integrity of Sertoli cell tight junctions at the blood-testis barrier. The chain is Ankycorbin (Rai14) from Mus musculus (Mouse).